A 341-amino-acid chain; its full sequence is Elongation factor Ts (341 aa).

The interval 80–83 (TDFV) is involved in Mg(2+) ion dislocation from EF-Tu.

The protein belongs to the EF-Ts family.

The protein resides in the cytoplasm. Associates with the EF-Tu.GDP complex and induces the exchange of GDP to GTP. It remains bound to the aminoacyl-tRNA.EF-Tu.GTP complex up to the GTP hydrolysis stage on the ribosome. In Lactobacillus acidophilus (strain ATCC 700396 / NCK56 / N2 / NCFM), this protein is Elongation factor Ts.